A 460-amino-acid polypeptide reads, in one-letter code: Wadjet protein JetA (460 aa).

In terms of biological role, component of antiplasmid transformation system Wadjet type I, composed of JetA, JetB, JetC and JetD. Expression of Wadjet type I in B.subtilis (strain BEST7003) reduces the transformation efficiency of plasmid pHCMC05. The polypeptide is Wadjet protein JetA (Bacillus cereus (strain Q1)).